The sequence spans 466 residues: Ras-GEF domain-containing family member 1C (466 aa).

Polar residues predominate over residues methionine 1–proline 23. Disordered stretches follow at residues methionine 1 to aspartate 35 and serine 443 to threonine 466. The region spanning leucine 34–alanine 164 is the N-terminal Ras-GEF domain. The Ras-GEF domain maps to aspartate 200–proline 446.

Its function is as follows. Guanine nucleotide exchange factor (GEF). This chain is Ras-GEF domain-containing family member 1C (RASGEF1C), found in Macaca fascicularis (Crab-eating macaque).